We begin with the raw amino-acid sequence, 64 residues long: Large ribosomal subunit protein bL32 (64 aa).

Residues 1–35 form a disordered region; it reads MAVQKSRVTPSRRGQRRSHDALTAKQLSTDPTSGE.

It belongs to the bacterial ribosomal protein bL32 family.

In Xanthomonas campestris pv. campestris (strain 8004), this protein is Large ribosomal subunit protein bL32.